Consider the following 651-residue polypeptide: Peptide-N(4)-(N-acetyl-beta-glucosaminyl)asparagine amidase (651 aa).

At A2 the chain carries N-acetylalanine. Residues 30–91 (EASKLLLTYA…EGETHLIFPK (62 aa)) enclose the PUB domain. Zn(2+) contacts are provided by C247, C250, C280, and C283. The Nucleophile role is filled by C306. Residues H333 and D350 contribute to the active site. The 201-residue stretch at 451–651 (ELGGRVSGSL…LEIIITFNDL (201 aa)) folds into the PAW domain.

It belongs to the transglutaminase-like superfamily. PNGase family. As to quaternary structure, component of a complex required to couple retrotranslocation, ubiquitination and deglycosylation composed of NGLY1, SAKS1, AMFR, VCP and RAD23B. Interacts with the proteasome components RAD23B and PSMC1. Interacts with directly with VCP. Interacts with DERL1, bringing it close to the endoplasmic reticulum membrane. Interacts with SAKS1. Zn(2+) serves as cofactor. Ubiquitously expressed with highest level in testis.

The protein localises to the cytoplasm. The catalysed reaction is Hydrolysis of an N(4)-(acetyl-beta-D-glucosaminyl)asparagine residue in which the glucosamine residue may be further glycosylated, to yield a (substituted) N-acetyl-beta-D-glucosaminylamine and a peptide containing an aspartate residue.. Inhibited by Z-VAD-fmk, a well-known caspase inhibitor, which inhibits enzyme activity through covalent binding of the carbohydrate to the single Cys-306 residue. Functionally, specifically deglycosylates the denatured form of N-linked glycoproteins in the cytoplasm and assists their proteasome-mediated degradation. Cleaves the beta-aspartyl-glucosamine (GlcNAc) of the glycan and the amide side chain of Asn, converting Asn to Asp. Prefers proteins containing high-mannose over those bearing complex type oligosaccharides. Can recognize misfolded proteins in the endoplasmic reticulum that are exported to the cytosol to be destroyed and deglycosylate them, while it has no activity toward native proteins. Deglycosylation is a prerequisite for subsequent proteasome-mediated degradation of some, but not all, misfolded glycoproteins. This is Peptide-N(4)-(N-acetyl-beta-glucosaminyl)asparagine amidase (Ngly1) from Mus musculus (Mouse).